The sequence spans 247 residues: Small ribosomal subunit protein uS3 (247 aa).

One can recognise a KH type-2 domain in the interval 39–109 (IRSMIRSFPE…KVQIKVKEIK (71 aa)). A disordered region spans residues 224-247 (RSRRESGQKSDELVRDERTHAERG). Residues 227–247 (RESGQKSDELVRDERTHAERG) show a composition bias toward basic and acidic residues.

This sequence belongs to the universal ribosomal protein uS3 family. In terms of assembly, part of the 30S ribosomal subunit. Forms a tight complex with proteins S10 and S14.

Functionally, binds the lower part of the 30S subunit head. Binds mRNA in the 70S ribosome, positioning it for translation. The polypeptide is Small ribosomal subunit protein uS3 (Treponema pallidum (strain Nichols)).